An 89-amino-acid chain; its full sequence is Small ribosomal subunit protein uS15 (89 aa).

It belongs to the universal ribosomal protein uS15 family. Part of the 30S ribosomal subunit. Forms a bridge to the 50S subunit in the 70S ribosome, contacting the 23S rRNA.

Its function is as follows. One of the primary rRNA binding proteins, it binds directly to 16S rRNA where it helps nucleate assembly of the platform of the 30S subunit by binding and bridging several RNA helices of the 16S rRNA. In terms of biological role, forms an intersubunit bridge (bridge B4) with the 23S rRNA of the 50S subunit in the ribosome. This Rhizobium etli (strain CIAT 652) protein is Small ribosomal subunit protein uS15.